Here is a 607-residue protein sequence, read N- to C-terminus: Protein PLASTID MOVEMENT IMPAIRED 2 (607 aa).

Coiled coils occupy residues Lys-66–Leu-295 and Met-329–Arg-445.

It belongs to the WEB family. Interacts with WEB1. In terms of tissue distribution, ubiquitous but preferentially in chloroplast-containing tissues.

It localises to the cytoplasm. In terms of biological role, required for the chloroplast avoidance response under high intensity blue light. This avoidance response consists in the relocation of chloroplasts on the anticlinal side of exposed cells. Acts in association with WEB1 to maintain the velocity of chloroplast photorelocation movement via cp-actin filaments regulation. The chain is Protein PLASTID MOVEMENT IMPAIRED 2 (PMI2) from Arabidopsis thaliana (Mouse-ear cress).